A 920-amino-acid polypeptide reads, in one-letter code: Nitrate reductase [NADH] (920 aa).

Positions 1-69 (MAASVENRQF…DTSDDEEDEA (69 aa)) are disordered. Acidic residues predominate over residues 60–69 (DTSDDEEDEA). Residue C185 participates in Mo-molybdopterin binding. Residues 534-609 (SLTFTMSEVK…LEEYRVGELI (76 aa)) form the Cytochrome b5 heme-binding domain. Residues H569 and H592 each contribute to the heme site. An FAD-binding FR-type domain is found at 663–775 (REKIPCKLIS…KGPLGHIEYM (113 aa)). FAD-binding positions include 715–718 (RAYT), 732–736 (LVKIY), F737, F744, 749–751 (LMS), and T802.

The protein belongs to the nitrate reductase family. As to quaternary structure, homodimer. It depends on FAD as a cofactor. The cofactor is heme. Requires Mo-molybdopterin as cofactor. In terms of tissue distribution, in cortical cells of roots grown at low nitrate concentrations, in vascular tissues of roots at high nitrate concentrations and in root apex under both conditions.

The catalysed reaction is nitrite + NAD(+) + H2O = nitrate + NADH + H(+). Functionally, nitrate reductase is a key enzyme involved in the first step of nitrate assimilation in plants, fungi and bacteria. This Cichorium intybus (Chicory) protein is Nitrate reductase [NADH] (NIA).